Consider the following 308-residue polypeptide: Elongation factor Ts (308 aa).

The segment at 80 to 83 is involved in Mg(2+) ion dislocation from EF-Tu; the sequence is TDFV.

It belongs to the EF-Ts family.

It localises to the cytoplasm. In terms of biological role, associates with the EF-Tu.GDP complex and induces the exchange of GDP to GTP. It remains bound to the aminoacyl-tRNA.EF-Tu.GTP complex up to the GTP hydrolysis stage on the ribosome. In Rhizobium etli (strain ATCC 51251 / DSM 11541 / JCM 21823 / NBRC 15573 / CFN 42), this protein is Elongation factor Ts.